A 428-amino-acid chain; its full sequence is MSYLVTIIAFIIVFGVLVTVHEYGHMFFAKRAGIMCPEFAIGMGPKIFSFRKNETLYTIRLLPVGGYVRMAGDGLEEPPVEPGMNVKIKLNEENEITHIILDDHHKFQQIEAIEVKKCDFKDDLFIEGITAYDNERHHFKIARKSFFVENGSLVQIAPRDRQFAHKKPWPKFLTLFAGPLFNFILALVLFIGLAYYQGTPTSTVEQVADKYPAQQAGLQKGDKIVQIGKYKISEFDDVDKALDKVKDNKTTVKFERDGKTKSVELTPKKTEKKLTKVSSETKYVLGFQPASEHTLFKPIVFGFKSFLIGSTYIFTAVVGMLASIFTGGFSFDMLNGPVGIYHNVDSVVKAGIISLIGYTALLSVNLGIMNLIPIPALDGGRILFVIYEAIFRKPVNKKAETTIIAIGAIFMVVIMILVTWNDIRRYFL.

His-21 contacts Zn(2+). Glu-22 is a catalytic residue. His-25 contributes to the Zn(2+) binding site. 4 consecutive transmembrane segments (helical) span residues 172-194 (FLTLFAGPLFNFILALVLFIGLA), 309-331 (GSTYIFTAVVGMLASIFTGGFSF), 352-374 (IISLIGYTALLSVNLGIMNLIPI), and 401-420 (TTIIAIGAIFMVVIMILVTW). The 84-residue stretch at 186 to 269 (ALVLFIGLAY…TKSVELTPKK (84 aa)) folds into the PDZ domain.

It belongs to the peptidase M50B family. It depends on Zn(2+) as a cofactor.

It is found in the cell membrane. This Staphylococcus aureus (strain COL) protein is Putative zinc metalloprotease SACOL1281.